The chain runs to 124 residues: Small ribosomal subunit protein uS12 (124 aa).

Residues 1-32 are disordered; the sequence is MPTIQQLVRKGRQDKVSKNKTPALKGSPQRRG. D89 is modified (3-methylthioaspartic acid).

This sequence belongs to the universal ribosomal protein uS12 family. Part of the 30S ribosomal subunit. Contacts proteins S8 and S17. May interact with IF1 in the 30S initiation complex.

Functionally, with S4 and S5 plays an important role in translational accuracy. In terms of biological role, interacts with and stabilizes bases of the 16S rRNA that are involved in tRNA selection in the A site and with the mRNA backbone. Located at the interface of the 30S and 50S subunits, it traverses the body of the 30S subunit contacting proteins on the other side and probably holding the rRNA structure together. The combined cluster of proteins S8, S12 and S17 appears to hold together the shoulder and platform of the 30S subunit. This chain is Small ribosomal subunit protein uS12, found in Nocardioides sp. (strain ATCC BAA-499 / JS614).